A 401-amino-acid chain; its full sequence is S-adenosylmethionine synthase 1 (401 aa).

Histidine 15 is an ATP binding site. Aspartate 17 provides a ligand contact to Mg(2+). Position 43 (glutamate 43) interacts with K(+). L-methionine contacts are provided by glutamate 56 and glutamine 98. Residues 98–108 (QSPDIAQGVDK) form a flexible loop region. ATP contacts are provided by residues 173-175 (DGK), 246-247 (RF), aspartate 255, 261-262 (RK), alanine 278, and lysine 282. Residue aspartate 255 participates in L-methionine binding. Lysine 286 is an L-methionine binding site.

This sequence belongs to the AdoMet synthase family. As to quaternary structure, homotetramer; dimer of dimers. Mg(2+) is required as a cofactor. It depends on K(+) as a cofactor.

Its subcellular location is the cytoplasm. The catalysed reaction is L-methionine + ATP + H2O = S-adenosyl-L-methionine + phosphate + diphosphate. The protein operates within amino-acid biosynthesis; S-adenosyl-L-methionine biosynthesis; S-adenosyl-L-methionine from L-methionine: step 1/1. Functionally, catalyzes the formation of S-adenosylmethionine (AdoMet) from methionine and ATP. The overall synthetic reaction is composed of two sequential steps, AdoMet formation and the subsequent tripolyphosphate hydrolysis which occurs prior to release of AdoMet from the enzyme. This Frankia casuarinae (strain DSM 45818 / CECT 9043 / HFP020203 / CcI3) protein is S-adenosylmethionine synthase 1.